An 86-amino-acid chain; its full sequence is Cell division topological specificity factor (86 aa).

This sequence belongs to the MinE family.

In terms of biological role, prevents the cell division inhibition by proteins MinC and MinD at internal division sites while permitting inhibition at polar sites. This ensures cell division at the proper site by restricting the formation of a division septum at the midpoint of the long axis of the cell. This chain is Cell division topological specificity factor, found in Allorhizobium ampelinum (strain ATCC BAA-846 / DSM 112012 / S4) (Agrobacterium vitis (strain S4)).